We begin with the raw amino-acid sequence, 143 residues long: Small ribosomal subunit protein uS12 (143 aa).

A compositionally biased stretch (basic residues) spans 1 to 20 (MGKPRGLRTARKHRSHRRDQ). The tract at residues 1-26 (MGKPRGLRTARKHRSHRRDQRWHDKD) is disordered. P62 bears the Hydroxyproline mark.

It belongs to the universal ribosomal protein uS12 family. Component of the 40S small ribosomal subunit.

Its subcellular location is the cytoplasm. The protein localises to the cytosol. It localises to the rough endoplasmic reticulum. In Dermacentor variabilis (American dog tick), this protein is Small ribosomal subunit protein uS12 (RpS23).